The primary structure comprises 574 residues: ATP synthase subunit beta, mitochondrial (574 aa).

The transit peptide at 1–26 (MLSSVRLAALRAGKTNSVFQAVRAFA) directs the protein to the mitochondrion. Residue 183-190 (GGAGVGKT) coordinates ATP.

Belongs to the ATPase alpha/beta chains family. F-type ATPases have 2 components, CF(1) - the catalytic core - and CF(0) - the membrane proton channel. CF(1) has five subunits: alpha(3), beta(3), gamma(1), delta(1), epsilon(1). CF(0) has three main subunits: a, b and c.

The protein localises to the mitochondrion. The protein resides in the mitochondrion inner membrane. It catalyses the reaction ATP + H2O + 4 H(+)(in) = ADP + phosphate + 5 H(+)(out). Mitochondrial membrane ATP synthase (F(1)F(0) ATP synthase or Complex V) produces ATP from ADP in the presence of a proton gradient across the membrane which is generated by electron transport complexes of the respiratory chain. F-type ATPases consist of two structural domains, F(1) - containing the extramembraneous catalytic core, and F(0) - containing the membrane proton channel, linked together by a central stalk and a peripheral stalk. During catalysis, ATP synthesis in the catalytic domain of F(1) is coupled via a rotary mechanism of the central stalk subunits to proton translocation. Subunits alpha and beta form the catalytic core in F(1). Rotation of the central stalk against the surrounding alpha(3)beta(3) subunits leads to hydrolysis of ATP in three separate catalytic sites on the beta subunits. The chain is ATP synthase subunit beta, mitochondrial (ATP2) from Chlamydomonas reinhardtii (Chlamydomonas smithii).